The chain runs to 334 residues: Phosphate acyltransferase (334 aa).

Belongs to the PlsX family. As to quaternary structure, homodimer. Probably interacts with PlsY.

Its subcellular location is the cytoplasm. It carries out the reaction a fatty acyl-[ACP] + phosphate = an acyl phosphate + holo-[ACP]. It participates in lipid metabolism; phospholipid metabolism. Catalyzes the reversible formation of acyl-phosphate (acyl-PO(4)) from acyl-[acyl-carrier-protein] (acyl-ACP). This enzyme utilizes acyl-ACP as fatty acyl donor, but not acyl-CoA. The chain is Phosphate acyltransferase from Streptococcus thermophilus (strain ATCC BAA-491 / LMD-9).